The sequence spans 293 residues: tRNA pseudouridine synthase B (293 aa).

Aspartate 38 serves as the catalytic Nucleophile.

This sequence belongs to the pseudouridine synthase TruB family. Type 1 subfamily.

It catalyses the reaction uridine(55) in tRNA = pseudouridine(55) in tRNA. Its function is as follows. Responsible for synthesis of pseudouridine from uracil-55 in the psi GC loop of transfer RNAs. This chain is tRNA pseudouridine synthase B, found in Solibacter usitatus (strain Ellin6076).